We begin with the raw amino-acid sequence, 84 residues long: Cell division topological specificity factor (84 aa).

This sequence belongs to the MinE family.

Its function is as follows. Prevents the cell division inhibition by proteins MinC and MinD at internal division sites while permitting inhibition at polar sites. This ensures cell division at the proper site by restricting the formation of a division septum at the midpoint of the long axis of the cell. The chain is Cell division topological specificity factor from Burkholderia mallei (strain NCTC 10247).